The chain runs to 188 residues: MIEIIEGIYKGRSEGKILVSINGVVFGIITDAESFSEFNEGDKILVYTKLIVSQEDMTIYGFDSKVKKETFEKLIKVSKLGPKTAIKILSSTTVDFLSNAIATGDVEKLSSIPGIGRKTAERMITELKDEFEVVEVNEEMLEAIEALVSLGYSKTQARNAVSKVLKESPNISNVSKIIKEALKILAKI.

A domain I region spans residues 1–63 (MIEIIEGIYK…QEDMTIYGFD (63 aa)). Positions 64-142 (SKVKKETFEK…VVEVNEEMLE (79 aa)) are domain II. Position 142 (Glu142) is a region of interest, flexible linker. Residues 142–188 (EAIEALVSLGYSKTQARNAVSKVLKESPNISNVSKIIKEALKILAKI) form a domain III region.

The protein belongs to the RuvA family. As to quaternary structure, homotetramer. Forms an RuvA(8)-RuvB(12)-Holliday junction (HJ) complex. HJ DNA is sandwiched between 2 RuvA tetramers; dsDNA enters through RuvA and exits via RuvB. An RuvB hexamer assembles on each DNA strand where it exits the tetramer. Each RuvB hexamer is contacted by two RuvA subunits (via domain III) on 2 adjacent RuvB subunits; this complex drives branch migration. In the full resolvosome a probable DNA-RuvA(4)-RuvB(12)-RuvC(2) complex forms which resolves the HJ.

Its subcellular location is the cytoplasm. Functionally, the RuvA-RuvB-RuvC complex processes Holliday junction (HJ) DNA during genetic recombination and DNA repair, while the RuvA-RuvB complex plays an important role in the rescue of blocked DNA replication forks via replication fork reversal (RFR). RuvA specifically binds to HJ cruciform DNA, conferring on it an open structure. The RuvB hexamer acts as an ATP-dependent pump, pulling dsDNA into and through the RuvAB complex. HJ branch migration allows RuvC to scan DNA until it finds its consensus sequence, where it cleaves and resolves the cruciform DNA. In Fervidobacterium nodosum (strain ATCC 35602 / DSM 5306 / Rt17-B1), this protein is Holliday junction branch migration complex subunit RuvA.